The chain runs to 305 residues: UDP-3-O-acyl-N-acetylglucosamine deacetylase (305 aa).

Zn(2+) contacts are provided by H79, H238, and D242. H265 (proton donor) is an active-site residue.

Belongs to the LpxC family. Zn(2+) serves as cofactor.

The catalysed reaction is a UDP-3-O-[(3R)-3-hydroxyacyl]-N-acetyl-alpha-D-glucosamine + H2O = a UDP-3-O-[(3R)-3-hydroxyacyl]-alpha-D-glucosamine + acetate. Its pathway is glycolipid biosynthesis; lipid IV(A) biosynthesis; lipid IV(A) from (3R)-3-hydroxytetradecanoyl-[acyl-carrier-protein] and UDP-N-acetyl-alpha-D-glucosamine: step 2/6. Functionally, catalyzes the hydrolysis of UDP-3-O-myristoyl-N-acetylglucosamine to form UDP-3-O-myristoylglucosamine and acetate, the committed step in lipid A biosynthesis. The protein is UDP-3-O-acyl-N-acetylglucosamine deacetylase of Haemophilus influenzae (strain PittGG).